The primary structure comprises 335 residues: MQALVNKIWYEGHPLRWLLLPFSVLFALITAIRRSLFRLGLKSQTALPVPVIVVGNITVGGSGKTPTVIYLIELLRQHGFNPGVISRGYGADIQGVKVVTAVDSAAAVGDEPAMIVARTSVPMVVGAKRVDTAKALLAEFAVDVIICDDGLQHYALGRDIELVVIDGKRGLGNRHLLPAGPLREGAWRLNQVDFVVVNGGPAQANQFEMQLSPSAVLPVNPKAEAVFNPTQPVVAMAGIGHPARFFETLTQQGIQLALSHGFDDHQAYDKHVLCELAASRPLMMTEKDAVKCRDFAQENWWYLAVDAKLSPQFDQQLLSRVRSVAAAKQGKSHGV.

58 to 65 (TVGGSGKT) is an ATP binding site.

The protein belongs to the LpxK family.

It catalyses the reaction a lipid A disaccharide + ATP = a lipid IVA + ADP + H(+). Its pathway is glycolipid biosynthesis; lipid IV(A) biosynthesis; lipid IV(A) from (3R)-3-hydroxytetradecanoyl-[acyl-carrier-protein] and UDP-N-acetyl-alpha-D-glucosamine: step 6/6. Transfers the gamma-phosphate of ATP to the 4'-position of a tetraacyldisaccharide 1-phosphate intermediate (termed DS-1-P) to form tetraacyldisaccharide 1,4'-bis-phosphate (lipid IVA). This Shewanella sp. (strain ANA-3) protein is Tetraacyldisaccharide 4'-kinase.